Here is a 257-residue protein sequence, read N- to C-terminus: Short-chain dehydrogenase reductase 3b (257 aa).

12-36 (IITGGASGIGAESVRLFTEHGARVV) is a binding site for NAD(+). A substrate-binding site is contributed by serine 144. Catalysis depends on tyrosine 157, which acts as the Proton acceptor.

It belongs to the short-chain dehydrogenases/reductases (SDR) family.

The protein is Short-chain dehydrogenase reductase 3b (SDR3b) of Arabidopsis thaliana (Mouse-ear cress).